Here is a 231-residue protein sequence, read N- to C-terminus: Flagellar L-ring protein (231 aa).

The N-terminal stretch at 1-18 (MNRYVSVLALSGIAVLAG) is a signal peptide. The N-palmitoyl cysteine moiety is linked to residue cysteine 19. Residue cysteine 19 is the site of S-diacylglycerol cysteine attachment.

This sequence belongs to the FlgH family. In terms of assembly, the basal body constitutes a major portion of the flagellar organelle and consists of four rings (L,P,S, and M) mounted on a central rod.

It is found in the cell outer membrane. It localises to the bacterial flagellum basal body. Assembles around the rod to form the L-ring and probably protects the motor/basal body from shearing forces during rotation. The polypeptide is Flagellar L-ring protein (Pseudomonas fluorescens (strain SBW25)).